The sequence spans 119 residues: Large ribosomal subunit protein bL20 (119 aa).

The protein belongs to the bacterial ribosomal protein bL20 family.

In terms of biological role, binds directly to 23S ribosomal RNA and is necessary for the in vitro assembly process of the 50S ribosomal subunit. It is not involved in the protein synthesizing functions of that subunit. The sequence is that of Large ribosomal subunit protein bL20 from Herminiimonas arsenicoxydans.